The following is a 295-amino-acid chain: Pyridoxal 5'-phosphate synthase subunit PdxS (295 aa).

Residue D23 coordinates D-ribose 5-phosphate. K80 acts as the Schiff-base intermediate with D-ribose 5-phosphate in catalysis. G152 lines the D-ribose 5-phosphate pocket. R164 contributes to the D-glyceraldehyde 3-phosphate binding site. Residues G213 and 234-235 (GS) contribute to the D-ribose 5-phosphate site.

The protein belongs to the PdxS/SNZ family. In the presence of PdxT, forms a dodecamer of heterodimers.

It catalyses the reaction aldehydo-D-ribose 5-phosphate + D-glyceraldehyde 3-phosphate + L-glutamine = pyridoxal 5'-phosphate + L-glutamate + phosphate + 3 H2O + H(+). Its pathway is cofactor biosynthesis; pyridoxal 5'-phosphate biosynthesis. In terms of biological role, catalyzes the formation of pyridoxal 5'-phosphate from ribose 5-phosphate (RBP), glyceraldehyde 3-phosphate (G3P) and ammonia. The ammonia is provided by the PdxT subunit. Can also use ribulose 5-phosphate and dihydroxyacetone phosphate as substrates, resulting from enzyme-catalyzed isomerization of RBP and G3P, respectively. In Methanosphaera stadtmanae (strain ATCC 43021 / DSM 3091 / JCM 11832 / MCB-3), this protein is Pyridoxal 5'-phosphate synthase subunit PdxS.